The primary structure comprises 457 residues: Exodeoxyribonuclease 7 large subunit (457 aa).

Belongs to the XseA family. Heterooligomer composed of large and small subunits.

Its subcellular location is the cytoplasm. The catalysed reaction is Exonucleolytic cleavage in either 5'- to 3'- or 3'- to 5'-direction to yield nucleoside 5'-phosphates.. Functionally, bidirectionally degrades single-stranded DNA into large acid-insoluble oligonucleotides, which are then degraded further into small acid-soluble oligonucleotides. The polypeptide is Exodeoxyribonuclease 7 large subunit (Photorhabdus laumondii subsp. laumondii (strain DSM 15139 / CIP 105565 / TT01) (Photorhabdus luminescens subsp. laumondii)).